The chain runs to 218 residues: DNA ADP-ribosyl transferase (218 aa).

In terms of domain architecture, DarT spans 14–217 (ALIWRIVHRD…SVHTRSGWYF (204 aa)). NAD(+) is bound by residues 18 to 20 (RIV) and R57. The tract at residues 41–59 (QAENWINIGNPELIGKRAG) is NAD(+)-binding element. Catalysis depends on R57, which acts as the Proton acceptor. The interval 123–170 (TDSHAYYNWTNYYTSLNSLDQIDWPILQARDFRRDPDDPAKFERYQAE) is ADP-ribosylating turn-turn loop. E170 is an active-site residue.

This sequence belongs to the DarT ADP-ribosyltransferase family. As to quaternary structure, interacts with cognate antitoxin DarG (via C-terminus); this heterodimeric complex neutralizes the toxic effect of DarT by preventing ssDNA binding to DarT and consequently inactivating the toxin by direct protein-protein interactions.

It catalyses the reaction a thymidine in DNA + NAD(+) = an N-(ADP-alpha-D-ribosyl)-thymidine in DNA + nicotinamide + H(+). Functionally, toxic component of the hybrid type II/IV toxin-antitoxin (TA) system DarTG, which plays a crucial role in controlling bacterial growth and bacteriophage infection. ADP-ribosylates ssDNA in the sequence TTT/TCT. In case of phage infection, DarT toxin ADP-ribosylates DNA, which inhibits both viral DNA and RNA synthesis and leads to abortive infection. Its toxic effect is neutralized by cognate antitoxin DarG. May target ssDNA loops during DNA replication, probably modifies thymidine. Wild-type protein cannot be expressed at low levels in the absence of its cognate antitoxin, but a mutant protein (G49D) can be expressed, which slows growth, rapidly inhibits DNA replication, and induces RecA expression and the SOS response. The slow growth phenotype can be suppressed by cognate antitoxin DarG. Has no activity on dsDNA in vitro. In vivo ADP-ribosylates genomic DNA (gDNA). Genetic data strongly suggests ADP-ribosylation by DarT probably generates ssDNA gaps that are repaired by the RecFOR-mediated homologous recombination pathway (RuvAB, RecG) and resolved by RuvC. In some cases these gaps probably migrate into dsDNA, where they are resolved by nucleotide excision repair (NER) detected by UvrAB, excised by UvrC, removed by UvrD, and repaired by Pol I and ligase. Other pathways may also be involved in ADP-ribosylation removal from DNA. The protein is DNA ADP-ribosyl transferase of Escherichia coli O127:H6 (strain E2348/69 / EPEC).